Reading from the N-terminus, the 727-residue chain is Translation initiation factor IF-2, mitochondrial (727 aa).

The transit peptide at 1-29 (MNQKLLKLENLLRFHTIYRQLHSLCQRRA) directs the protein to the mitochondrion. Positions 178–348 (PRSPVVTIMG…VALAEMLELK (171 aa)) constitute a tr-type G domain. The tract at residues 187 to 194 (GHVDHGKT) is G1. GTP is bound at residue 187 to 194 (GHVDHGKT). The segment at 212-216 (GITQH) is G2. Residues 234–237 (DTPG) and 288–291 (NKCD) contribute to the GTP site. The interval 234–237 (DTPG) is G3. The interval 288–291 (NKCD) is G4. The tract at residues 324–326 (SAL) is G5. Thr-688 is modified (phosphothreonine).

Belongs to the TRAFAC class translation factor GTPase superfamily. Classic translation factor GTPase family. IF-2 subfamily. In terms of assembly, monomer. In terms of tissue distribution, expressed in all tissues examined. Highest level in skeletal muscle.

The protein resides in the mitochondrion. One of the essential components for the initiation of protein synthesis. Protects formylmethionyl-tRNA from spontaneous hydrolysis and promotes its binding to the 30S ribosomal subunits. Also involved in the hydrolysis of GTP during the formation of the 70S ribosomal complex. The protein is Translation initiation factor IF-2, mitochondrial (MTIF2) of Homo sapiens (Human).